A 131-amino-acid polypeptide reads, in one-letter code: Insulin-like 3 (131 aa).

Positions 1 to 20 are cleaved as a signal peptide; it reads MDPRLPAWALVLLGPALVFA. Cystine bridges form between cysteine 34–cysteine 116, cysteine 46–cysteine 129, and cysteine 115–cysteine 120. A propeptide spans 58-104 (c peptide like); the sequence is PATGGDRELLQWLERRHLLHGLVADSNLTLGPGLQPLPQTSHHHRHH.

The protein belongs to the insulin family. As to quaternary structure, heterodimer of a B chain and an A chain linked by two disulfide bonds. As to expression, expressed in prenatal and postnatal Leydig cells. Found as well in the corpus luteum, trophoblast, fetal membranes and breast.

Its subcellular location is the secreted. In terms of biological role, seems to play a role in testicular function. May be a trophic hormone with a role in testicular descent in fetal life. Is a ligand for LGR8 receptor. This is Insulin-like 3 (INSL3) from Homo sapiens (Human).